The following is a 164-amino-acid chain: C-phycoerythrin alpha chain (164 aa).

The (2R,3E)-phycoerythrobilin site is built by C82 and C139.

This sequence belongs to the phycobiliprotein family. Heterodimer of an alpha and a beta chain. Post-translationally, contains two covalently linked bilin chromophores.

The protein localises to the cellular thylakoid membrane. Its function is as follows. Light-harvesting photosynthetic bile pigment-protein from the phycobiliprotein complex. This chain is C-phycoerythrin alpha chain (cpeA), found in Pseudanabaena tenuis (strain PCC 7409).